An 874-amino-acid chain; its full sequence is Rho GTPase-activating protein 42 (874 aa).

Residues 7–262 (EFSDSYLDSP…MKSANQDYRP (256 aa)) form the BAR domain. A coiled-coil region spans residues 225 to 261 (KQQLQFNLQNTRNNFESTRQEVERLMQRMKSANQDYR). Residues 265 to 374 (QWTMEGYLYV…WLEAMDGKEP (110 aa)) form the PH domain. Y376 carries the post-translational modification Phosphotyrosine. Residues 376 to 572 (YTLPAIISKK…ILIEHYEKIF (197 aa)) enclose the Rho-GAP domain. Positions 575–720 (APDPSIPLPQ…GDVSPPIDLV (146 aa)) are disordered. Over residues 620–650 (DSYSSSPDSTPMGSIESLSSHSSEQNSTTKS) the composition is skewed to low complexity. Residues 667-686 (TPSSSNGQKSLGLWTTSPES) show a composition bias toward polar residues. S683 bears the Phosphoserine mark. Positions 687 to 697 (SSREDATKTDA) are enriched in basic and acidic residues. The segment covering 700–711 (DCQSVASVTSPG) has biased composition (polar residues). S740, S753, S756, and S811 each carry phosphoserine. Positions 749-762 (SYSGSIQSLTSVGS) are enriched in polar residues. Residues 749 to 777 (SYSGSIQSLTSVGSKETPKASPNPDLPPK) are disordered. The SH3 domain occupies 816-874 (SSGRQAKAMYSCKAEHSHELSFPQGAIFSNVYPSVEPGWLKATYEGKTGLVPENYVVFL). A Phosphotyrosine modification is found at Y870.

As to expression, highly and selectively expressed in smooth muscle cells.

May influence blood pressure by functioning as a GTPase-activating protein for RHOA in vascular smooth muscle. The sequence is that of Rho GTPase-activating protein 42 from Homo sapiens (Human).